Here is a 151-residue protein sequence, read N- to C-terminus: MRVPLDEIDKKIIKILQNDGKAPLREISKITGLAESTIHERIRKLRESGVIKKFTAIIDPEALGYSMLAFILVKVKAGKYSEVASNLAKYPEIVEVYETTGDYDMVVKIRTKNSEELNNFLDLIGSIPGVEGTHTMIVLKTHKETTELPIK.

One can recognise an HTH asnC-type domain in the interval 5 to 66 (LDEIDKKIIK…IIDPEALGYS (62 aa)). Residues 24 to 43 (LREISKITGLAESTIHERIR) constitute a DNA-binding region (H-T-H motif). 98–104 (ETTGDYD) serves as a coordination point for L-arginine. Residues Asn-118, Asp-122, and 133 to 135 (THT) each bind L-lysine. L-arginine-binding positions include Asp-122 and 133–135 (THT).

As to quaternary structure, homodimer. Binds DNA as a dimer and an octamer. The octamer formed with lysine is stable in solution, but the octamer formed with arginine is unstable without DNA. When crystallized in the absence of DNA, dimers are assembled into helical cylinders with six dimers per turn. In solution, predominantly behaves as a dimer.

In the famine mode, FL11 forms dimers and acts as a repressor, leading to growth arrest. In the feast mode, in the presence of high concentrations of lysine or arginine, four dimers assemble into an octamer and cover the fl11 and lysine biosynthesis promoters. This leads to the inhibition of fl11 expression and lysine biosynthesis, decrease of the FL11 concentration in the cell, derepression of the target genes and activation of the metabolism. In terms of biological role, DNA-binding protein involved in the repression of transcription of a large number of genes, thereby arresting growth, in response to environmental changes. Binding sites are identified in promoters of approximately 200 transcription units, including genes involved in ATP synthesis, transmembrane transport, translation and DNA synthesis. The polypeptide is HTH-type transcriptional regulator FL11 (Pyrococcus horikoshii (strain ATCC 700860 / DSM 12428 / JCM 9974 / NBRC 100139 / OT-3)).